Here is a 120-residue protein sequence, read N- to C-terminus: Chaperonin GroEL (120 aa).

Residue Asp-23–Thr-27 coordinates ATP.

The protein belongs to the chaperonin (HSP60) family. In terms of assembly, forms a cylinder of 14 subunits composed of two heptameric rings stacked back-to-back. Interacts with the co-chaperonin GroES.

It is found in the cytoplasm. It carries out the reaction ATP + H2O + a folded polypeptide = ADP + phosphate + an unfolded polypeptide.. Its function is as follows. Together with its co-chaperonin GroES, plays an essential role in assisting protein folding. The GroEL-GroES system forms a nano-cage that allows encapsulation of the non-native substrate proteins and provides a physical environment optimized to promote and accelerate protein folding. This Mycobacterium asiaticum protein is Chaperonin GroEL.